The sequence spans 113 residues: Large ribosomal subunit protein uL24 (113 aa).

It belongs to the universal ribosomal protein uL24 family. In terms of assembly, part of the 50S ribosomal subunit.

One of two assembly initiator proteins, it binds directly to the 5'-end of the 23S rRNA, where it nucleates assembly of the 50S subunit. In terms of biological role, one of the proteins that surrounds the polypeptide exit tunnel on the outside of the subunit. This is Large ribosomal subunit protein uL24 from Micrococcus luteus (Micrococcus lysodeikticus).